A 380-amino-acid chain; its full sequence is mRNA cap guanine-N(7) methyltransferase (380 aa).

An mRNA cap 0 methyltransferase domain is found at 24 to 333; it reads SRIFFMRNMN…MYLVFGFRKK (310 aa). 33–34 serves as a coordination point for mRNA; the sequence is NN. Lysine 37, alanine 62, aspartate 84, aspartate 117, glutamine 139, and tyrosine 144 together coordinate S-adenosyl-L-methionine. Residues 336–380 form a disordered region; sequence EAEKTEEEPATTKPVAESESEQKEVTESEEKEDQEDCEHQEAQTN.

It belongs to the class I-like SAM-binding methyltransferase superfamily. mRNA cap 0 methyltransferase family.

It localises to the nucleus. It carries out the reaction a 5'-end (5'-triphosphoguanosine)-ribonucleoside in mRNA + S-adenosyl-L-methionine = a 5'-end (N(7)-methyl 5'-triphosphoguanosine)-ribonucleoside in mRNA + S-adenosyl-L-homocysteine. In terms of biological role, mRNA-capping methyltransferase that methylates the N7 position of the added guanosine to the 5'-cap structure of mRNAs. Binds RNA containing 5'-terminal GpppC. The chain is mRNA cap guanine-N(7) methyltransferase (tag-72) from Caenorhabditis elegans.